The primary structure comprises 465 residues: Cysteine--tRNA ligase (465 aa).

Zn(2+) is bound at residue cysteine 30. Residues 32–42 (MTVYDYCHVGH) carry the 'HIGH' region motif. Zn(2+)-binding residues include cysteine 214, histidine 239, and glutamate 243. A 'KMSKS' region motif is present at residues 271–275 (KMSKS). Lysine 274 is a binding site for ATP.

It belongs to the class-I aminoacyl-tRNA synthetase family. As to quaternary structure, monomer. It depends on Zn(2+) as a cofactor.

The protein resides in the cytoplasm. The enzyme catalyses tRNA(Cys) + L-cysteine + ATP = L-cysteinyl-tRNA(Cys) + AMP + diphosphate. The sequence is that of Cysteine--tRNA ligase from Paraburkholderia xenovorans (strain LB400).